We begin with the raw amino-acid sequence, 1096 residues long: Protein transport protein SEC24 B (1096 aa).

The segment at 1–315 is disordered; the sequence is MAAPVPPGAY…SAPGTPGSIY (315 aa). Low complexity predominate over residues 12–23; the sequence is PNNNQQNSGGPP. Polar residues predominate over residues 27–45; the sequence is PGSQGNPNSLAANMQNLNI. Over residues 47-64 the composition is skewed to pro residues; sequence RPPPPMPGSGPRPSPPFG. Over residues 65 to 78 the composition is skewed to low complexity; the sequence is QSPQSFPQQQQQQP. Pro residues predominate over residues 79 to 92; it reads RPSPMARPGPPPPA. Residues 93–107 are compositionally biased toward low complexity; the sequence is AMARPGGPPQVSQPG. A compositionally biased stretch (pro residues) spans 108 to 122; it reads GFPPVGRPVAPPSNQ. The segment covering 140 to 149 has biased composition (low complexity); sequence SFPQPGGFPA. Composition is skewed to pro residues over residues 150–160, 171–186, 246–258, and 287–303; these read SGPPGGVPSGP, SPPP…PPSG, MAPP…PPNA, and GRPP…PPQQ. Zn(2+) is bound by residues cysteine 433, cysteine 436, cysteine 455, and cysteine 458. Residues 433 to 458 form a zinc finger-like region; that stretch reads CSRCKGYVNPFMKFIDQGRKFICNLC.

This sequence belongs to the SEC23/SEC24 family. SEC24 subfamily. As to quaternary structure, component of the coat protein complex II (COPII), composed of at least five proteins: the Sec23/24 complex, the Sec13/31 complex and Sar1. As to expression, mainly expressed in pollen, roots, stems, petioles and hypocotyls, and, to a lower extent, in leaves and cotyledons.

The protein localises to the cytoplasmic vesicle. The protein resides in the COPII-coated vesicle membrane. It localises to the endoplasmic reticulum membrane. It is found in the golgi apparatus membrane. Component of the coat protein complex II (COPII), that covers ER-derived vesicles involved in transport from the endoplasmic reticulum to the Golgi apparatus. COPII is composed of at least five proteins: the SEC23/24 complex, the SEC13/31 complex, and the protein SAR1. Acts in the cytoplasm to promote the transport of secretory, plasma membrane, and vacuolar proteins from the endoplasmic reticulum to the Golgi complex. This chain is Protein transport protein SEC24 B, found in Arabidopsis thaliana (Mouse-ear cress).